A 472-amino-acid chain; its full sequence is Gamma-glutamylputrescine synthetase PuuA (472 aa).

Positions 35–129 constitute a GS beta-grasp domain; sequence PNTQYVDVLL…MLLTMVDEDG (95 aa). Residues 136–472 enclose the GS catalytic domain; sequence PRNVLNRLWQ…TEIEWMLKNA (337 aa).

It belongs to the glutamine synthetase family. In terms of assembly, dodecamer. The cofactor is Mg(2+). Mn(2+) is required as a cofactor.

The enzyme catalyses putrescine + L-glutamate + ATP = gamma-L-glutamylputrescine + ADP + phosphate + H(+). Its pathway is amine and polyamine degradation; putrescine degradation; 4-aminobutanoate from putrescine: step 1/4. Involved in the breakdown of putrescine. Catalyzes the ATP-dependent gamma-glutamylation of putrescine, producing gamma-L-glutamylputrescine. Absolutely essential to utilize putrescine as both nitrogen and carbon sources and to decrease the toxicity of putrescine, which can lead to inhibition of cell growth and protein synthesis. In vitro is also able to use several diamines, and spermidine and spermine, instead of putrescine, but with a much lower activity, and cannot catalyze the gamma-glutamylation of ornithine or GABA. The chain is Gamma-glutamylputrescine synthetase PuuA from Escherichia coli (strain K12).